We begin with the raw amino-acid sequence, 83 residues long: Acid shock protein (83 aa).

The N-terminal stretch at 1–21 (MKKVLALVVAAAMGLSSAAFA) is a signal peptide. A compositionally biased stretch (low complexity) spans 22–40 (AETATPAKTATPAKTTQNT). Residues 22-56 (AETATPAKTATPAKTTQNTQHHKKQHKKTVEQKAQ) constitute a propeptide that is removed on maturation. A disordered region spans residues 22 to 83 (AETATPAKTA…TSKTTSQPAA (62 aa)). Positions 57 to 70 (AAKKHQKKDGKKAP) are enriched in basic residues. Over residues 71–83 (AKSTSKTTSQPAA) the composition is skewed to low complexity.

The protein belongs to the Asr family. Proteolytic processing gives rise to the active protein.

Its subcellular location is the periplasm. In terms of biological role, required for growth and/or survival at acidic conditions. This Salmonella heidelberg (strain SL476) protein is Acid shock protein.